We begin with the raw amino-acid sequence, 286 residues long: Bifunctional protein FolD (286 aa).

NADP(+) contacts are provided by residues 166-168, S191, and I232; that span reads GRS.

It belongs to the tetrahydrofolate dehydrogenase/cyclohydrolase family. Homodimer.

The enzyme catalyses (6R)-5,10-methylene-5,6,7,8-tetrahydrofolate + NADP(+) = (6R)-5,10-methenyltetrahydrofolate + NADPH. The catalysed reaction is (6R)-5,10-methenyltetrahydrofolate + H2O = (6R)-10-formyltetrahydrofolate + H(+). The protein operates within one-carbon metabolism; tetrahydrofolate interconversion. Its function is as follows. Catalyzes the oxidation of 5,10-methylenetetrahydrofolate to 5,10-methenyltetrahydrofolate and then the hydrolysis of 5,10-methenyltetrahydrofolate to 10-formyltetrahydrofolate. This chain is Bifunctional protein FolD, found in Herpetosiphon aurantiacus (strain ATCC 23779 / DSM 785 / 114-95).